We begin with the raw amino-acid sequence, 155 residues long: Transcription antitermination protein NusB (155 aa).

This sequence belongs to the NusB family.

In terms of biological role, involved in transcription antitermination. Required for transcription of ribosomal RNA (rRNA) genes. Binds specifically to the boxA antiterminator sequence of the ribosomal RNA (rrn) operons. The protein is Transcription antitermination protein NusB of Vibrio campbellii (strain ATCC BAA-1116).